The primary structure comprises 277 residues: C2H2-type zinc-finger transcription factor (277 aa).

2 disordered regions span residues 23-66 and 78-146; these read PTMN…AHPP and MNEP…TDSI. The span at 27–37 shows a compositional bias: polar residues; the sequence is EIETTDNTYPR. The C2H2-type; degenerate zinc finger occupies 185-208; sequence HPCPDCGRVFTRSTARNFHRQSGT.

It belongs to the GLI C2H2-type zinc-finger protein family.

It is found in the nucleus. C2H2-type zinc-finger transcription factor that controls the expression of the nonribosomal peptide synthases inpA and inpB, as well as of the other inp cluster-associated genes. Also mediates the expression of the asperfuranone biosynthesis gene cluster by binding to the afoA promoter. Probably recognizes the 5'-CT/C/AAAAGGAT/AT/GG/CA-3' motif in the promoters of teget genes. This chain is C2H2-type zinc-finger transcription factor, found in Emericella nidulans (strain FGSC A4 / ATCC 38163 / CBS 112.46 / NRRL 194 / M139) (Aspergillus nidulans).